The sequence spans 456 residues: Protein FAM124B (456 aa).

The segment at 262–313 is disordered; that stretch reads NGCLRGDTHPQDSSLNSVSTQRTLEPRSRRRSRSRRFKVHSLELPQPSGSWE. The span at 272–284 shows a compositional bias: polar residues; that stretch reads QDSSLNSVSTQRT. A compositionally biased stretch (basic residues) spans 289–300; that stretch reads SRRRSRSRRFKV.

This sequence belongs to the FAM124 family. Interacts with CHD7 and CHD8. Expressed strongly in lung, at slightly lower levels in heart, kidney, brain and testis, and weakly in liver (at protein level). In brain, highly expressed in cortex, hippocampus, dentate gyrus, caudate putamen and cerebellum (at protein level).

It localises to the nucleus. The polypeptide is Protein FAM124B (Fam124b) (Mus musculus (Mouse)).